The chain runs to 212 residues: ATP-dependent dethiobiotin synthetase BioD (212 aa).

13 to 18 (GIGKTV) lines the ATP pocket. Position 17 (T17) interacts with Mg(2+). Residue K33 is part of the active site. S37 contacts substrate. Residue E100 coordinates Mg(2+). Residues 100–103 (EGAG) and 184–186 (PRL) each bind ATP.

Belongs to the dethiobiotin synthetase family. Homodimer. It depends on Mg(2+) as a cofactor.

The protein localises to the cytoplasm. The catalysed reaction is (7R,8S)-7,8-diammoniononanoate + CO2 + ATP = (4R,5S)-dethiobiotin + ADP + phosphate + 3 H(+). Its pathway is cofactor biosynthesis; biotin biosynthesis; biotin from 7,8-diaminononanoate: step 1/2. Catalyzes a mechanistically unusual reaction, the ATP-dependent insertion of CO2 between the N7 and N8 nitrogen atoms of 7,8-diaminopelargonic acid (DAPA, also called 7,8-diammoniononanoate) to form a ureido ring. This chain is ATP-dependent dethiobiotin synthetase BioD, found in Agrobacterium fabrum (strain C58 / ATCC 33970) (Agrobacterium tumefaciens (strain C58)).